A 456-amino-acid polypeptide reads, in one-letter code: Bifunctional protein GlmU (456 aa).

Residues 1–229 (MLNNAMSVVI…LSEVEGVNNR (229 aa)) form a pyrophosphorylase region. Residues 11–14 (LAAG), K25, Q76, 81–82 (GT), 103–105 (YGD), G140, E154, N169, and N227 each bind UDP-N-acetyl-alpha-D-glucosamine. D105 serves as a coordination point for Mg(2+). Mg(2+) is bound at residue N227. The tract at residues 230–250 (LQLSRLERVYQSEQAEKLLLA) is linker. An N-acetyltransferase region spans residues 251–456 (GVMLRDPARF…EGWRRPVKKK (206 aa)). UDP-N-acetyl-alpha-D-glucosamine contacts are provided by R333 and K351. H363 acts as the Proton acceptor in catalysis. UDP-N-acetyl-alpha-D-glucosamine contacts are provided by Y366 and N377. Residues A380, 386-387 (NY), S405, A423, and R440 each bind acetyl-CoA.

The protein in the N-terminal section; belongs to the N-acetylglucosamine-1-phosphate uridyltransferase family. This sequence in the C-terminal section; belongs to the transferase hexapeptide repeat family. As to quaternary structure, homotrimer. Mg(2+) is required as a cofactor.

It localises to the cytoplasm. It catalyses the reaction alpha-D-glucosamine 1-phosphate + acetyl-CoA = N-acetyl-alpha-D-glucosamine 1-phosphate + CoA + H(+). The catalysed reaction is N-acetyl-alpha-D-glucosamine 1-phosphate + UTP + H(+) = UDP-N-acetyl-alpha-D-glucosamine + diphosphate. It functions in the pathway nucleotide-sugar biosynthesis; UDP-N-acetyl-alpha-D-glucosamine biosynthesis; N-acetyl-alpha-D-glucosamine 1-phosphate from alpha-D-glucosamine 6-phosphate (route II): step 2/2. Its pathway is nucleotide-sugar biosynthesis; UDP-N-acetyl-alpha-D-glucosamine biosynthesis; UDP-N-acetyl-alpha-D-glucosamine from N-acetyl-alpha-D-glucosamine 1-phosphate: step 1/1. It participates in bacterial outer membrane biogenesis; LPS lipid A biosynthesis. Catalyzes the last two sequential reactions in the de novo biosynthetic pathway for UDP-N-acetylglucosamine (UDP-GlcNAc). The C-terminal domain catalyzes the transfer of acetyl group from acetyl coenzyme A to glucosamine-1-phosphate (GlcN-1-P) to produce N-acetylglucosamine-1-phosphate (GlcNAc-1-P), which is converted into UDP-GlcNAc by the transfer of uridine 5-monophosphate (from uridine 5-triphosphate), a reaction catalyzed by the N-terminal domain. The chain is Bifunctional protein GlmU from Escherichia coli O127:H6 (strain E2348/69 / EPEC).